The chain runs to 595 residues: 2-succinyl-5-enolpyruvyl-6-hydroxy-3-cyclohexene-1-carboxylate synthase (595 aa).

It belongs to the TPP enzyme family. MenD subfamily. As to quaternary structure, homodimer. It depends on Mg(2+) as a cofactor. Requires Mn(2+) as cofactor. The cofactor is thiamine diphosphate.

It carries out the reaction isochorismate + 2-oxoglutarate + H(+) = 5-enolpyruvoyl-6-hydroxy-2-succinyl-cyclohex-3-ene-1-carboxylate + CO2. It functions in the pathway quinol/quinone metabolism; 1,4-dihydroxy-2-naphthoate biosynthesis; 1,4-dihydroxy-2-naphthoate from chorismate: step 2/7. It participates in cofactor biosynthesis; phylloquinone biosynthesis. Functionally, catalyzes the thiamine diphosphate-dependent decarboxylation of 2-oxoglutarate and the subsequent addition of the resulting succinic semialdehyde-thiamine pyrophosphate anion to isochorismate to yield 2-succinyl-5-enolpyruvyl-6-hydroxy-3-cyclohexene-1-carboxylate (SEPHCHC). The sequence is that of 2-succinyl-5-enolpyruvyl-6-hydroxy-3-cyclohexene-1-carboxylate synthase from Synechocystis sp. (strain ATCC 27184 / PCC 6803 / Kazusa).